We begin with the raw amino-acid sequence, 79 residues long: Biotin synthase auxiliary protein (79 aa).

This sequence belongs to the BsaP family. The cofactor is iron-sulfur cluster.

Functionally, required for the activity of the biotin synthase BioB. This Mycobacterium bovis (strain ATCC BAA-935 / AF2122/97) protein is Biotin synthase auxiliary protein.